Here is a 173-residue protein sequence, read N- to C-terminus: Pyridoxal 5'-phosphate synthase subunit PdxT (173 aa).

Position 49–51 (49–51 (GES)) interacts with L-glutamine. C81 (nucleophile) is an active-site residue. L-glutamine contacts are provided by residues R113 and 141-142 (IR).

Belongs to the glutaminase PdxT/SNO family. In terms of assembly, in the presence of PdxS, forms a dodecamer of heterodimers. Only shows activity in the heterodimer.

The catalysed reaction is aldehydo-D-ribose 5-phosphate + D-glyceraldehyde 3-phosphate + L-glutamine = pyridoxal 5'-phosphate + L-glutamate + phosphate + 3 H2O + H(+). It catalyses the reaction L-glutamine + H2O = L-glutamate + NH4(+). Its pathway is cofactor biosynthesis; pyridoxal 5'-phosphate biosynthesis. Its function is as follows. Catalyzes the hydrolysis of glutamine to glutamate and ammonia as part of the biosynthesis of pyridoxal 5'-phosphate. The resulting ammonia molecule is channeled to the active site of PdxS. The protein is Pyridoxal 5'-phosphate synthase subunit PdxT of Mycolicibacterium paratuberculosis (strain ATCC BAA-968 / K-10) (Mycobacterium paratuberculosis).